The chain runs to 503 residues: Probable inactive beta-glucosidase 33 (503 aa).

A signal peptide spans 1 to 30; sequence MATGELALVSSLFIVVVFLLLGAVAREASA. A beta-D-glucoside contacts are provided by residues Q50, H150, and 195–196; that span reads NQ. C215 and C223 are oxidised to a cystine. The N-linked (GlcNAc...) asparagine glycan is linked to N222. Residues Y339 and E399 each contribute to the a beta-D-glucoside site. The active-site Nucleophile is the E399. N436 carries N-linked (GlcNAc...) asparagine glycosylation. A beta-D-glucoside-binding positions include W446, 453–454, and F462; that span reads EF.

Belongs to the glycosyl hydrolase 1 family.

The sequence is that of Probable inactive beta-glucosidase 33 (BGLU33) from Oryza sativa subsp. japonica (Rice).